The following is a 391-amino-acid chain: Multidrug resistance protein MdtL (391 aa).

The next 12 helical transmembrane spans lie at 4–24 (FLIC…MYLV), 42–62 (IAFS…GKVA), 69–89 (PVAI…SLAE), 93–113 (LFLA…VVAF), 131–151 (LLNG…HLIM), 158–178 (SLFW…LFIL), 203–222 (FFLS…LTFV), 245–265 (ALTA…LGIF), 269–289 (TLMI…AVSP), 293–313 (VSLF…GVAM), 331–351 (LGIA…VVGI), and 356–376 (MLIG…MFVA).

It belongs to the major facilitator superfamily. DHA1 family. MdtL (TC 2.A.1.2.22) subfamily.

The protein localises to the cell inner membrane. In terms of biological role, confers resistance to chloramphenicol. The polypeptide is Multidrug resistance protein MdtL (Escherichia coli O17:K52:H18 (strain UMN026 / ExPEC)).